Consider the following 152-residue polypeptide: Superoxide dismutase [Cu-Zn] 4AP (152 aa).

Histidine 45, histidine 47, and histidine 62 together coordinate Cu cation. Cysteines 56 and 145 form a disulfide. 4 residues coordinate Zn(2+): histidine 62, histidine 70, histidine 79, and aspartate 82. Histidine 119 contacts Cu cation.

This sequence belongs to the Cu-Zn superoxide dismutase family. As to quaternary structure, homodimer. Cu cation serves as cofactor. Requires Zn(2+) as cofactor.

The protein localises to the cytoplasm. It catalyses the reaction 2 superoxide + 2 H(+) = H2O2 + O2. Destroys radicals which are normally produced within the cells and which are toxic to biological systems. The protein is Superoxide dismutase [Cu-Zn] 4AP (SODCC.2) of Zea mays (Maize).